We begin with the raw amino-acid sequence, 511 residues long: Zinc finger CCCH-type with G patch domain-containing protein (511 aa).

Residue Met-1 is modified to N-acetylmethionine. Ser-70 carries the phosphoserine modification. The tract at residues 92-129 (PGAPCNDSETAPGSEVQPGSTSSALEEEEEDPDLEELS) is disordered. The span at 98–115 (DSETAPGSEVQPGSTSSA) shows a compositional bias: polar residues. The span at 116-127 (LEEEEEDPDLEE) shows a compositional bias: acidic residues. The segment at 174–200 (KSLKPCPFFLEGKCRFKENCRFSHGQV) adopts a C3H1-type zinc-finger fold. The segment at 266–291 (PPLRTEATESSDSDTGDASDSSYARV) is disordered. Ser-276 carries the phosphoserine modification. Thr-280 is subject to Phosphothreonine. The region spanning 313–359 (TRGIGSKLLVKMGYEFGKGLGRHAEGRVEPIHAVVLPRGKSLDQCAE) is the G-patch domain. A Phosphoserine modification is found at Ser-353. Disordered regions lie at residues 363 to 393 (KKTK…PPRN) and 490 to 511 (AQEA…MTEF). Basic and acidic residues predominate over residues 491-511 (QEADLQRKQRKADTHRKMTEF).

As to quaternary structure, interacts with CHD4/Mi-2; the interaction is direct.

It is found in the nucleus. Functionally, transcription repressor that specifically binds the 5'-GGAG[GA]A[GA]A-3' consensus sequence. Represses transcription by recruiting the chromatin multiprotein complex NuRD to target promoters. Negatively regulates expression of EGFR, a gene involved in cell proliferation, survival and migration. Its ability to repress genes of the EGFR pathway suggest it may act as a tumor suppressor. The chain is Zinc finger CCCH-type with G patch domain-containing protein (Zgpat) from Mus musculus (Mouse).